A 20-amino-acid polypeptide reads, in one-letter code: U1-poneritoxin-Ni1a (20 aa).

Residue K20 is modified to Lysine amide.

The protein belongs to the non-disulfide-bridged peptide (NDBP) superfamily. Medium-length antimicrobial peptide (group 3) family. Ponericin-W subfamily. In terms of tissue distribution, expressed by the venom gland.

It localises to the secreted. It is found in the target cell membrane. Has activity against Gram-positive bacteria. Has insecticidal and hemolytic activities. May act by disrupting the integrity of the bacterial cell membrane. This chain is U1-poneritoxin-Ni1a, found in Neoponera inversa (Ant).